Consider the following 104-residue polypeptide: Thioredoxin (104 aa).

In terms of domain architecture, Thioredoxin spans 2–104 (AIVKATDQSF…ALQELVNKHL (103 aa)). The cysteines at positions 29 and 32 are disulfide-linked.

Belongs to the thioredoxin family.

Participates in various redox reactions through the reversible oxidation of its active center dithiol to a disulfide and catalyzes dithiol-disulfide exchange reactions. In Bacillus subtilis (strain 168), this protein is Thioredoxin (trxA).